Consider the following 366-residue polypeptide: MSEKSASNNKAEFKRQSSPFREIISADHPIYKPAKGRYWLYVALPCPWAQRTLITRALKGLAPIIGCSVAHWHLDDKGWRFLEEGDGKTNERHWFDIAGGISSVNLNTSTPVANIPNNAHRLLVDGTDEPHYGYKRLSDFYFKTKPDYKGRFTVPVLWDLETCTIVNNESSDIIGIMNSAAFDEFVGEEYRQVRLVPRSLEAQITEFNSWVYDKINNGVYKAGFAECAEVYEREVTSLFQYLDKLENLLDKKYTDLEAEYGKNNKDKILDRYFAIGDTLTEADVRLYPTIVRFDVVYHQHFKCNLATIRDDYSRIHTWLKNIYWRHEAFQRTTDFTHIKLGYTRSQPRVNPIGITPLGPKPDIRPP.

C46 is an active-site residue. The 153-residue stretch at 197 to 349 (PRSLEAQITE…LGYTRSQPRV (153 aa)) folds into the GST C-terminal domain.

It belongs to the GST superfamily. Omega family.

The protein resides in the cytoplasm. It catalyses the reaction RX + glutathione = an S-substituted glutathione + a halide anion + H(+). In terms of biological role, active as '1-Cys' thiol transferase against beta-hydroxyethyl disulfide (HED), as dehydroascorbate reductase and as dimethylarsinic acid reductase, while not active against the standard GST substrate 1-chloro-2,4-dinitrobenzene (CDNB). The chain is Glutathione S-transferase omega-like 3 (GTO3) from Saccharomyces cerevisiae (strain ATCC 204508 / S288c) (Baker's yeast).